The following is a 481-amino-acid chain: Phosphoglycerate kinase 1, chloroplastic (481 aa).

The N-terminal 75 residues, 1-75 (MASAAASSAF…VRGKGSRGVV (75 aa)), are a transit peptide targeting the chloroplast. Ser81 carries the phosphoserine modification. (2R)-3-phosphoglycerate-binding residues include Ala99, Asp100, Asn102, Arg116, Thr138, His139, Gly141, Arg142, Arg197, His229, and Arg230. Gly275 lines the ADP pocket. Gly275 contacts CDP. Residues Lys277 and Lys281 each contribute to the AMP site. Lys281 lines the ATP pocket. Position 299 (Gly299) interacts with ADP. Residue Gly299 participates in CDP binding. Positions 300 and 372 each coordinate AMP. 2 residues coordinate ATP: Gly300 and Gly372. Residues Gly397 and Phe402 each contribute to the CDP site. ADP is bound at residue Phe402. An AMP-binding site is contributed by Glu403. Residues Glu403, Asp434, and Ser435 each contribute to the ATP site. Asp434 serves as a coordination point for Mg(2+).

Belongs to the phosphoglycerate kinase family. In terms of assembly, monomer. Binds to FTSZ2-1 and FTSZ2-2. It depends on Mg(2+) as a cofactor.

The protein resides in the plastid. Its subcellular location is the chloroplast. The enzyme catalyses (2R)-3-phosphoglycerate + ATP = (2R)-3-phospho-glyceroyl phosphate + ADP. It functions in the pathway carbohydrate biosynthesis; Calvin cycle. Functionally, may trigger the phosphorylation of FTSZ2-1 and FTSZ2-2. This Arabidopsis thaliana (Mouse-ear cress) protein is Phosphoglycerate kinase 1, chloroplastic.